The following is a 441-amino-acid chain: MGKVVQLFTHPLELKAALKLKFLREPLYPADDTQGSAELKRCYQLLQRTSRSFAAVIMELHPELRNAVMLFYLILRALDTVEDDMTISPKVKVPLLREFDQKLKLDTWSFDGNAKTEKDRDVLVEFSTILAEFHKLKPEYQQVIADITHKMGNGMADYILDEKFNLSGLETIQDYDRYCHYVAGLVGDGLTHLIMLAKFSSPGLYYDSPDLYESMGLFLQKTNIIRDYAEDLADGRSFWPKEIWSHYADDLASFSKPENATAGVYCINHLVLNALGHVQHVLTYLASLREQSSFQFCAIPQVMAIATLALVFGNERVLQTSVKIRKGTTCYLILKSRTFQGCVEIFEHYLRDIRKRLTVADPNYLKLNIEIAKLDKFIEEMYQDKLPVGAKPQETEIYKKVRERSAYDLEVLPREQEEEFKFNVLLSILFTVFGALYWYAK.

2 consecutive transmembrane segments (helical) span residues 293 to 313 (SFQF…LVFG) and 420 to 440 (FKFN…YWYA).

This sequence belongs to the phytoene/squalene synthase family. Requires Mg(2+) as cofactor.

It localises to the endoplasmic reticulum membrane. It catalyses the reaction 2 (2E,6E)-farnesyl diphosphate + NADPH + H(+) = squalene + 2 diphosphate + NADP(+). It carries out the reaction 2 (2E,6E)-farnesyl diphosphate + NADH + H(+) = squalene + 2 diphosphate + NAD(+). Its pathway is terpene metabolism; lanosterol biosynthesis; lanosterol from farnesyl diphosphate: step 1/3. Its function is as follows. Catalyzes the condensation of 2 two farnesyl pyrophosphate moieties to form squalene. It is the first committed enzyme of the sterol biosynthesis pathway. Required for the biosynthesis of ergosterol. The sequence is that of Squalene synthase (ERG9) from Eremothecium gossypii (strain ATCC 10895 / CBS 109.51 / FGSC 9923 / NRRL Y-1056) (Yeast).